The sequence spans 335 residues: Methionine import ATP-binding protein MetN 2 (335 aa).

The region spanning 2–242 (IEFHNVHKTY…PQHSTTKRFV (241 aa)) is the ABC transporter domain. 38-45 (GHSGAGKS) contributes to the ATP binding site.

Belongs to the ABC transporter superfamily. Methionine importer (TC 3.A.1.24) family. As to quaternary structure, the complex is composed of two ATP-binding proteins (MetN), two transmembrane proteins (MetI) and a solute-binding protein (MetQ).

It is found in the cell inner membrane. The catalysed reaction is L-methionine(out) + ATP + H2O = L-methionine(in) + ADP + phosphate + H(+). It catalyses the reaction D-methionine(out) + ATP + H2O = D-methionine(in) + ADP + phosphate + H(+). Part of the ABC transporter complex MetNIQ involved in methionine import. Responsible for energy coupling to the transport system. This Pseudomonas syringae pv. tomato (strain ATCC BAA-871 / DC3000) protein is Methionine import ATP-binding protein MetN 2.